Reading from the N-terminus, the 237-residue chain is Probable F-box protein At1g53815 (237 aa).

One can recognise an F-box domain in the interval 41 to 72; it reads ISNILSRLPLKSKAKCRCVSKLWSSIIRRPNY.

The chain is Probable F-box protein At1g53815 from Arabidopsis thaliana (Mouse-ear cress).